A 45-amino-acid chain; its full sequence is Cytochrome b559 subunit beta (45 aa).

The chain crosses the membrane as a helical span at residues 20–36 (WLALHTLGIPTVFFLGA). A heme-binding site is contributed by histidine 24.

The protein belongs to the PsbE/PsbF family. As to quaternary structure, heterodimer of an alpha subunit and a beta subunit. PSII is composed of 1 copy each of membrane proteins PsbA, PsbB, PsbC, PsbD, PsbE, PsbF, PsbH, PsbI, PsbJ, PsbK, PsbL, PsbM, PsbT, PsbX, PsbY, PsbZ, Psb30/Ycf12, peripheral proteins PsbO, CyanoQ (PsbQ), PsbU, PsbV and a large number of cofactors. It forms dimeric complexes. Heme b serves as cofactor.

Its subcellular location is the cellular thylakoid membrane. This b-type cytochrome is tightly associated with the reaction center of photosystem II (PSII). PSII is a light-driven water:plastoquinone oxidoreductase that uses light energy to abstract electrons from H(2)O, generating O(2) and a proton gradient subsequently used for ATP formation. It consists of a core antenna complex that captures photons, and an electron transfer chain that converts photonic excitation into a charge separation. The chain is Cytochrome b559 subunit beta from Synechococcus sp. (strain CC9902).